The primary structure comprises 448 residues: Gamma conglutin 2 (448 aa).

The first 33 residues, 1–33 (MAKNMAQIFPFIAVFLSCSFIFVLSSSQNSQSL), serve as a signal peptide directing secretion. In terms of domain architecture, Peptidase A1 spans 63–428 (HWANIHKRTP…DLERSRVEFN (366 aa)). 5 disulfide bridges follow: Cys91–Cys181, Cys105–Cys118, Cys110–Cys136, Cys121–Cys131, and Cys349–Cys390. A glycan (N-linked (GlcNAc...) asparagine) is linked at Asn133.

It belongs to the peptidase A1 family. Two-subunit monomeric unit made of alpha and beta subunits coupled by disulfide bonds (at pH 4.5 and under non-reducing conditions). Can also form oligomers including dimer, tetramer and cyclic hexamer (trimer of dimers) (at pH &gt; 5.5). Component of globulins complexes which accumulate in seeds. Interacts with flavonoids (e.g. apigenin glucosides) present in globulins complexes. In terms of processing, glycosylated on alpha chain. As to expression, expressed in developing seeds and in the young roots and cotyledons of germinating seeds and young seedlings.

The protein resides in the secreted. It is found in the extracellular space. In terms of biological role, sulfur-rich seed storage protein that remains undegraded at germination. This is Gamma conglutin 2 from Lupinus albus (White lupine).